A 284-amino-acid chain; its full sequence is Tropomyosin-1 (284 aa).

Residues 1-284 are a coiled coil; sequence MDGIKKKMIA…DQTFAELTGY (284 aa). Residues 111–131 form a disordered region; the sequence is TKLEEASKTAEESERGRKDLE.

It belongs to the tropomyosin family. In terms of assembly, homodimer.

Tropomyosin, in association with the troponin complex, plays a central role in the calcium dependent regulation of muscle contraction. This is Tropomyosin-1 from Schistosoma mansoni (Blood fluke).